We begin with the raw amino-acid sequence, 584 residues long: Ras-specific guanine nucleotide-releasing factor RalGPS1 (584 aa).

Over residues 1–13 (MDLMNGQSSSVNI) the composition is skewed to polar residues. Disordered regions lie at residues 1 to 29 (MDLM…SLSD), 285 to 338 (IEPG…IPHG), and 380 to 407 (HVPS…SELS). The span at 14 to 26 (AATASEKSSSSES) shows a compositional bias: low complexity. The region spanning 50–288 (TPEEYAGQIT…YKLSLKIEPG (239 aa)) is the Ras-GEF domain. Positions 326 to 329 (PTPP) match the PXXP motif. Residues 388-404 (ESSTLSSGISIGSSDGS) are compositionally biased toward low complexity. Residues 458–570 (AVTIQGVLRR…WFKHLSAACQ (113 aa)) enclose the PH domain.

It localises to the cytoplasm. The protein resides in the cell membrane. Guanine nucleotide exchange factor. May be involved in cytoskeletal organization. This chain is Ras-specific guanine nucleotide-releasing factor RalGPS1 (RALGPS1), found in Gallus gallus (Chicken).